The primary structure comprises 128 residues: Small ribosomal subunit protein uS9 (128 aa).

It belongs to the universal ribosomal protein uS9 family.

This Amoebophilus asiaticus (strain 5a2) protein is Small ribosomal subunit protein uS9.